The sequence spans 608 residues: MDYKALGLKTGLEIHIQLNTQRKLFCHCPPVLRDDEPHFRVERRLHISVSELGAVDPAVVWEVRKRRKYIYEGYRDTTCLVELDEEPPHLPDEEALVTAVAVAKMFNAKLFDEIYVMRKTVVDGSNVSGFQRTMLIAYGGRAKILGYDIGVETIALEEDAARKISEEGKAMVYRLDRLGIPLIEIATEPMAYTPQEVEEVAWIIGYSVKITGRAKRGVGTVRQDVNVSIAGGAKTEIKGVPDLSLIPKVIEYEAVRQVNLLKIAEELKRRGVGRVELSVADVTAAFANTKSRLVRKVLDSGGRVLALKTPGFQKLLGFEIQPGRRFGSELADYVRAWTELGGLLHSDELPGYGITAEEVREVANRLGVESFILLMGVEESELLEAAQVVVERLNMAPKGVPEETRAANPDGTTRFLRPRPGAARMYPETDLPPVKITFEIMKRAEEVAKINLDAKFKELISLGLSKDLALQLIKSPHLEKFEEYLDKFRSVPPQLIASILLNISKALAREGVEIDGAKIESVLDALNRRVITKEAVEEILRNMRPGESAEEVARRLGLVRLPYEEVKKIVEEVSRQTAKEKIIGEVMRRYRGRVDIEDVKRALAEIAS.

The protein belongs to the GatB/GatE family. GatE subfamily. In terms of assembly, heterodimer of GatD and GatE.

The enzyme catalyses L-glutamyl-tRNA(Gln) + L-glutamine + ATP + H2O = L-glutaminyl-tRNA(Gln) + L-glutamate + ADP + phosphate + H(+). Allows the formation of correctly charged Gln-tRNA(Gln) through the transamidation of misacylated Glu-tRNA(Gln) in organisms which lack glutaminyl-tRNA synthetase. The reaction takes place in the presence of glutamine and ATP through an activated gamma-phospho-Glu-tRNA(Gln). The GatDE system is specific for glutamate and does not act on aspartate. The sequence is that of Glutamyl-tRNA(Gln) amidotransferase subunit E from Pyrobaculum aerophilum (strain ATCC 51768 / DSM 7523 / JCM 9630 / CIP 104966 / NBRC 100827 / IM2).